We begin with the raw amino-acid sequence, 434 residues long: Mannose-6-phosphate isomerase (434 aa).

Zn(2+)-binding residues include glutamine 109, histidine 111, and glutamate 136. Positions 181 to 191 (SLGLPTSQPPD) are enriched in polar residues. Positions 181–200 (SLGLPTSQPPDTSLFKPTES) are disordered. Residue histidine 291 coordinates Zn(2+). Residue arginine 310 is part of the active site.

Belongs to the mannose-6-phosphate isomerase type 1 family. Requires Zn(2+) as cofactor.

The protein localises to the cytoplasm. It carries out the reaction D-mannose 6-phosphate = D-fructose 6-phosphate. The protein operates within nucleotide-sugar biosynthesis; GDP-alpha-D-mannose biosynthesis; alpha-D-mannose 1-phosphate from D-fructose 6-phosphate: step 1/2. Involved in the synthesis of the GDP-mannose and dolichol-phosphate-mannose required for a number of critical mannosyl transfer reactions. The sequence is that of Mannose-6-phosphate isomerase (MAN1) from Cryptococcus neoformans var. neoformans serotype D (strain JEC21 / ATCC MYA-565) (Filobasidiella neoformans).